We begin with the raw amino-acid sequence, 278 residues long: Polyamine aminopropyltransferase (278 aa).

The region spanning 5 to 238 is the PABS domain; sequence ELWFTEQQTP…GLWSFTLGSK (234 aa). An S-methyl-5'-thioadenosine-binding site is contributed by Gln34. 2 residues coordinate spermidine: His65 and Asp89. Residues Glu109 and 140–141 contribute to the S-methyl-5'-thioadenosine site; that span reads DG. Asp158 serves as the catalytic Proton acceptor. A spermidine-binding site is contributed by 158–161; the sequence is DSTD. Residue Pro165 participates in S-methyl-5'-thioadenosine binding.

Belongs to the spermidine/spermine synthase family. Homodimer or homotetramer.

The protein localises to the cytoplasm. The catalysed reaction is S-adenosyl 3-(methylsulfanyl)propylamine + putrescine = S-methyl-5'-thioadenosine + spermidine + H(+). It participates in amine and polyamine biosynthesis; spermidine biosynthesis; spermidine from putrescine: step 1/1. In terms of biological role, catalyzes the irreversible transfer of a propylamine group from the amino donor S-adenosylmethioninamine (decarboxy-AdoMet) to putrescine (1,4-diaminobutane) to yield spermidine. This is Polyamine aminopropyltransferase from Caldicellulosiruptor bescii (strain ATCC BAA-1888 / DSM 6725 / KCTC 15123 / Z-1320) (Anaerocellum thermophilum).